An 86-amino-acid polypeptide reads, in one-letter code: Precursor of CEP4 (86 aa).

Positions 1–30 are cleaved as a signal peptide; the sequence is MVSRGCSITVLFRFLIVLLVIQVHFENTKA. Positions 31 to 64 are excised as a propeptide; it reads ARHAPVVSWSPPEPPKDDFVWYHKINRFKNIEQD. Positions 63–86 are disordered; that stretch reads QDAFRPTHQGPSQGIGHKNPPGAP. A hydroxyproline mark is found at Pro68 and Pro73. A propeptide spanning residues 80–86 is cleaved from the precursor; it reads KNPPGAP.

Belongs to the C-terminally encoded plant signaling peptide (CEP) family. As to quaternary structure, interacts with CEP receptors (e.g. CEPR1 and CEPR2). The mature small signaling peptide is generated by proteolytic processing of the longer precursor. Expressed at low levels in flowers. Present in lateral roots, shoot apical meristem (SAM), flowers and siliques.

It is found in the secreted. The protein resides in the extracellular space. It localises to the apoplast. Its function is as follows. Extracellular signaling peptide that represses primary root growth rate. Promotes shoot growth and modulates leaf morphology. Regulates systemic nitrogen (N)-demand signaling. Mediates up-regulation of genes involved in N uptake and assimilation pathways. This Arabidopsis thaliana (Mouse-ear cress) protein is Precursor of CEP4.